The sequence spans 376 residues: UDP-N-acetylglucosamine 2-epimerase (376 aa).

Substrate-binding positions include Arg10, Lys15, Asp95, Glu117, His213, Gln271, Phe276, 290 to 292, Glu296, and Arg313; that span reads SGG.

It belongs to the UDP-N-acetylglucosamine 2-epimerase family. In terms of assembly, homodimer.

The protein localises to the cytoplasm. It carries out the reaction UDP-N-acetyl-alpha-D-glucosamine = UDP-N-acetyl-alpha-D-mannosamine. Its pathway is bacterial outer membrane biogenesis; enterobacterial common antigen biosynthesis. Functionally, catalyzes the reversible epimerization at C-2 of UDP-N-acetylglucosamine (UDP-GlcNAc) and thereby provides bacteria with UDP-N-acetylmannosamine (UDP-ManNAc), the activated donor of ManNAc residues. The chain is UDP-N-acetylglucosamine 2-epimerase from Escherichia coli O157:H7.